Here is a 504-residue protein sequence, read N- to C-terminus: MGCMKSKFLQAGGNTFSKTETSANPHCPVYVPDPTSTIKPGPNSNNRNTPGIGEGSEDIIVVALYDYEAIHHEDLSFQKGDQMVVLEESGEWWKARSLATRKEGYIPSNYVARVDSLETEEWFFKGISRKDAERQLLAPGNMLGSFMIRDSETTKGSYSLSVRDYDPRQGDTVKHYKIRTLDNGGFYISPRSTFSTLQELVDHYKKGSDGLCQKLSVPCVSSKPQKPWEKDAWEIPRESLKLEKKLGAGQFGEVWMATYNKHTKVAVKTMKPGSMSVEAFLAEANLMKTLQHDKLVKLHAVVTKEPIYIITEFMAKGSLLDFLKSDEGSKQPLPKLIDFSAQIAEGMAFIEQRNYIHRDLRAANILVSASLVCKIADFGLARIIEDNEYTAREGAKFPIKWTAPEAINFGSSTIKSDVWSFGILLMEIVTYGRIPYPGMSNPEVIRALERGYRMPRPENCPEELYNIMMRCWKNRPEERPTFEYIQSVLDDFYTATESQYQQQP.

Residue glycine 2 is the site of N-myristoyl glycine attachment. Cysteine 3 carries S-palmitoyl cysteine lipidation. The residue at position 15 (threonine 15) is a Phosphothreonine. Phosphotyrosine is present on tyrosine 30. The span at proline 34–threonine 49 shows a compositional bias: polar residues. The tract at residues proline 34 to glycine 53 is disordered. The SH3 domain maps to serine 56–serine 116. The SH2 domain occupies tryptophan 122–cysteine 219. Threonine 180 is modified (phosphothreonine). At tyrosine 187 the chain carries Phosphotyrosine. The region spanning leucine 240 to tyrosine 493 is the Protein kinase domain. ATP-binding positions include leucine 246 to valine 254 and lysine 268. Catalysis depends on aspartate 359, which acts as the Proton acceptor. Tyrosine 389 is modified (phosphotyrosine; by autocatalysis). At serine 440 the chain carries Phosphoserine. Residue tyrosine 500 is modified to Phosphotyrosine.

Belongs to the protein kinase superfamily. Tyr protein kinase family. SRC subfamily. In terms of assembly, interacts with ADAM15. Interacts with FASLG. Interacts with ARRB1 and ARRB2. Interacts with FCGR1A; the interaction may be indirect. Interacts with IL6ST. Interacts (via SH3 domain) with ELMO1. Interacts (via SH3 domain) with TP73. Interacts with YAP1. Interacts with ABL1 and ITGB1, and thereby recruits ABL1 to activated ITGB1. Interacts (via SH2 domain) with FLT3 (tyrosine phosphorylated). Interacts with CBL. Interacts with VAV1, WAS and RAPGEF1. Interacts (via SH3 domain) with WDCP. Phosphorylated on several tyrosine residues. Autophosphorylated. Becomes rapidly phosphorylated upon activation of the immunoglobulin receptors FCGR1A and FCGR2A. Phosphorylation at Tyr-389 increases kinase activity. Phosphorylation at Tyr-500 inhibits kinase activity. Kinase activity is not required for phosphorylation at Tyr-500, suggesting that this site may be a target of other kinases. In terms of processing, ubiquitinated by CBL, leading to its degradation via the proteasome. Post-translationally, palmitoylation requires prior myristoylation. Palmitoylation is required for caveolar localization.

It is found in the cytoplasmic vesicle. Its subcellular location is the secretory vesicle. The protein resides in the cytoplasm. The protein localises to the cytosol. It localises to the cell membrane. It is found in the membrane. Its subcellular location is the caveola. The protein resides in the cell junction. The protein localises to the focal adhesion. It localises to the cytoskeleton. It is found in the golgi apparatus. Its subcellular location is the lysosome. The protein resides in the nucleus. The enzyme catalyses L-tyrosyl-[protein] + ATP = O-phospho-L-tyrosyl-[protein] + ADP + H(+). Subject to autoinhibition, mediated by intramolecular interactions involving the SH2 and SH3 domains. Kinase activity is also regulated by phosphorylation at regulatory tyrosine residues. Phosphorylation at Tyr-389 is required for optimal activity. Phosphorylation at Tyr-500 inhibits kinase activity. Functionally, non-receptor tyrosine-protein kinase found in hematopoietic cells that transmits signals from cell surface receptors and plays an important role in the regulation of innate immune responses, including neutrophil, monocyte, macrophage and mast cell functions, phagocytosis, cell survival and proliferation, cell adhesion and migration. Acts downstream of receptors that bind the Fc region of immunoglobulins, such as FCGR1A and FCGR2A, but also CSF3R, PLAUR, the receptors for IFNG, IL2, IL6 and IL8, and integrins, such as ITGB1 and ITGB2. During the phagocytic process, mediates mobilization of secretory lysosomes, degranulation, and activation of NADPH oxidase to bring about the respiratory burst. Plays a role in the release of inflammatory molecules. Promotes reorganization of the actin cytoskeleton and actin polymerization, formation of podosomes and cell protrusions. Inhibits TP73-mediated transcription activation and TP73-mediated apoptosis. Phosphorylates CBL in response to activation of immunoglobulin gamma Fc region receptors. Phosphorylates ADAM15, BCR, ELMO1, FCGR2A, GAB1, GAB2, RAPGEF1, STAT5B, TP73, VAV1 and WAS. The polypeptide is Tyrosine-protein kinase HCK (HCK) (Macaca fascicularis (Crab-eating macaque)).